A 294-amino-acid chain; its full sequence is 2-methoxy-6-polyprenyl-1,4-benzoquinol methylase, mitochondrial (294 aa).

The N-terminal 10 residues, 1–10 (MALRSAAGRL), are a transit peptide targeting the mitochondrion. S-adenosyl-L-methionine contacts are provided by residues Thr100, Asp136, and 166–167 (DA).

The protein belongs to the class I-like SAM-binding methyltransferase superfamily. MenG/UbiE family. In terms of assembly, component of a multi-subunit COQ enzyme complex.

The protein localises to the mitochondrion inner membrane. It carries out the reaction a 2-methoxy-6-(all-trans-polyprenyl)benzene-1,4-diol + S-adenosyl-L-methionine = a 5-methoxy-2-methyl-3-(all-trans-polyprenyl)benzene-1,4-diol + S-adenosyl-L-homocysteine + H(+). Its pathway is cofactor biosynthesis; ubiquinone biosynthesis. Its function is as follows. Methyltransferase required for the conversion of 2-polyprenyl-6-methoxy-1,4-benzoquinol (DDMQH2) to 2-polyprenyl-3-methyl-6-methoxy-1,4-benzoquinol (DMQH2). The sequence is that of 2-methoxy-6-polyprenyl-1,4-benzoquinol methylase, mitochondrial from Oryza sativa subsp. japonica (Rice).